A 59-amino-acid chain; its full sequence is ATP synthase protein 8 (59 aa).

Residues 7 to 23 (LSPPFLYFELIGHFQVE) traverse the membrane as a helical segment.

This sequence belongs to the ATPase protein 8 family. F-type ATPases have 2 components, CF(1) - the catalytic core - and CF(0) - the membrane proton channel.

It is found in the mitochondrion membrane. Functionally, mitochondrial membrane ATP synthase (F(1)F(0) ATP synthase or Complex V) produces ATP from ADP in the presence of a proton gradient across the membrane which is generated by electron transport complexes of the respiratory chain. F-type ATPases consist of two structural domains, F(1) - containing the extramembraneous catalytic core and F(0) - containing the membrane proton channel, linked together by a central stalk and a peripheral stalk. During catalysis, ATP synthesis in the catalytic domain of F(1) is coupled via a rotary mechanism of the central stalk subunits to proton translocation. Part of the complex F(0) domain. Minor subunit located with subunit a in the membrane. The chain is ATP synthase protein 8 (MT-ATP8) from Oenothera berteroana (Bertero's evening primrose).